The following is a 268-amino-acid chain: Malonyl-[acyl-carrier protein] O-methyltransferase 1 (268 aa).

Belongs to the methyltransferase superfamily.

It carries out the reaction malonyl-[ACP] + S-adenosyl-L-methionine = malonyl-[ACP] methyl ester + S-adenosyl-L-homocysteine. It functions in the pathway cofactor biosynthesis; biotin biosynthesis. Its function is as follows. Converts the free carboxyl group of a malonyl-thioester to its methyl ester by transfer of a methyl group from S-adenosyl-L-methionine (SAM). It allows to synthesize pimeloyl-ACP via the fatty acid synthetic pathway. This Ilyobacter polytropus (strain ATCC 51220 / DSM 2926 / LMG 16218 / CuHBu1) protein is Malonyl-[acyl-carrier protein] O-methyltransferase 1.